We begin with the raw amino-acid sequence, 169 residues long: MSGTHKKLGARHKARKRAVDFLFEAEARDLDPVDLATERAELSGKDDSVAPVAPYTVTVVTGVAENLDRLDEVISSHLQDWTLERLPAVDRAILRIAVWELFHATDVPPVVAVDEAVELAKQLSTDESPGFVNGILGQVVLVAPQVRSAAAATSRRAETADGESNDARS.

It belongs to the NusB family.

Functionally, involved in transcription antitermination. Required for transcription of ribosomal RNA (rRNA) genes. Binds specifically to the boxA antiterminator sequence of the ribosomal RNA (rrn) operons. The polypeptide is Transcription antitermination protein NusB (Rhodococcus opacus (strain B4)).